A 358-amino-acid polypeptide reads, in one-letter code: Uroporphyrinogen decarboxylase (358 aa).

Residues 29-33, F48, D79, Y155, S210, and H330 contribute to the substrate site; that span reads RQAGR.

It belongs to the uroporphyrinogen decarboxylase family. In terms of assembly, homodimer.

The protein localises to the cytoplasm. It catalyses the reaction uroporphyrinogen III + 4 H(+) = coproporphyrinogen III + 4 CO2. It participates in porphyrin-containing compound metabolism; protoporphyrin-IX biosynthesis; coproporphyrinogen-III from 5-aminolevulinate: step 4/4. In terms of biological role, catalyzes the decarboxylation of four acetate groups of uroporphyrinogen-III to yield coproporphyrinogen-III. The protein is Uroporphyrinogen decarboxylase of Bordetella pertussis (strain Tohama I / ATCC BAA-589 / NCTC 13251).